The chain runs to 78 residues: Conotoxin TsMSGL-13 (78 aa).

The first 24 residues, 1 to 24 (MSGLGIMVLTLLLFMFMATSHQDA), serve as a signal peptide directing secretion. The propeptide occupies 25–44 (GEKQATQRDAINVRRRRSIT). Intrachain disulfides connect cysteine 51–cysteine 63, cysteine 55–cysteine 72, and cysteine 62–cysteine 76. Phenylalanine amide is present on phenylalanine 77.

This sequence belongs to the conotoxin O3 superfamily. As to expression, expressed by the venom duct.

The protein resides in the secreted. This chain is Conotoxin TsMSGL-13, found in Conus tessulatus (Tessellate cone).